A 623-amino-acid polypeptide reads, in one-letter code: Endoglucanase 7 (623 aa).

The Cytoplasmic portion of the chain corresponds to 1-79 (MHPGNVWGGS…LGCVSVSRTV (79 aa)). Residues 80-100 (FLWTVGSIAVLFLVVALPIII) traverse the membrane as a helical; Signal-anchor for type II membrane protein segment. Residues 101–623 (VKSLPRHKSA…TPPPPKAWKP (523 aa)) lie on the Extracellular side of the membrane. N-linked (GlcNAc...) asparagine glycans are attached at residues asparagine 116, asparagine 221, asparagine 328, asparagine 349, asparagine 412, asparagine 429, and asparagine 464. The active site involves histidine 517. The N-linked (GlcNAc...) asparagine glycan is linked to asparagine 548. The active site involves aspartate 565. Asparagine 571 carries N-linked (GlcNAc...) asparagine glycosylation. Glutamate 574 is an active-site residue.

Belongs to the glycosyl hydrolase 9 (cellulase E) family. Expressed in basal region of leaf blade and proximal parts of leaf and floral organ.

It localises to the membrane. It carries out the reaction Endohydrolysis of (1-&gt;4)-beta-D-glucosidic linkages in cellulose, lichenin and cereal beta-D-glucans.. This Arabidopsis thaliana (Mouse-ear cress) protein is Endoglucanase 7 (KOR2).